Consider the following 487-residue polypeptide: Fatty acid desaturase 2-like protein FADS2B (487 aa).

Residues 1 to 11 (MKLEEKLEHNE) are compositionally biased toward basic and acidic residues. The disordered stretch occupies residues 1–20 (MKLEEKLEHNESLVGKSRPC). The Cytoplasmic segment spans residues 1–175 (MKLEEKLEHN…AMNMFSANLR (175 aa)). The 78-residue stretch at 62-139 (LNLYTWQEIQ…LKPLLIGELS (78 aa)) folds into the Cytochrome b5 heme-binding domain. Heme is bound by residues H97 and H120. Residues 176-196 (FFFLHLAQILILEISAWLILH) form a helical membrane-spanning segment. The Lumenal portion of the chain corresponds to 197–201 (HFGSS). The chain crosses the membrane as a helical span at residues 202-222 (WLVTILISFLLTVSQAQCSFL). At 223-307 (QHDLGHLSMF…IKYIDYEKQH (85 aa)) the chain is on the cytoplasmic side. Residues 224–228 (HDLGH) carry the Histidine box-1 motif. Positions 261-265 (HFQHH) match the Histidine box-2 motif. The helical transmembrane segment at 308 to 328 (LYFYMVALPFLMPVYFNLQSM) threads the bilayer. The Lumenal segment spans residues 329–349 (QVMYLRKYWMDIAWVSSFYIR). The helical transmembrane segment at 350–370 (YFITFGPFYGIFGTVLLIYLV) threads the bilayer. The Cytoplasmic segment spans residues 371 to 487 (KFIESPWIAY…ASLWMNAYYE (117 aa)). Residues 426–430 (QIEHH) carry the Histidine box-3 motif.

It belongs to the fatty acid desaturase type 1 family.

Its subcellular location is the endoplasmic reticulum membrane. The protein operates within lipid metabolism; polyunsaturated fatty acid biosynthesis. The sequence is that of Fatty acid desaturase 2-like protein FADS2B from Mus musculus (Mouse).